Reading from the N-terminus, the 501-residue chain is Cystine/glutamate transporter (501 aa).

The Cytoplasmic segment spans residues 1–43; that stretch reads MVRKPVVSTISKGGYLQGNVNGRLPSLGNKEPPGQEKVQLKRK. Position 26 is a phosphoserine (S26). Residues 44-64 form a helical membrane-spanning segment; it reads VTLLRGVSIIIGTIIGAGIFI. Topologically, residues 65–74 are extracellular; the sequence is SPKGVLQNTG. Residues 75-95 traverse the membrane as a helical segment; sequence SVGMSLTIWTVCGVLSLFGAL. Topologically, residues 96 to 101 are cytoplasmic; the sequence is SYAELG. Residues 102–116 lie within the membrane without spanning it; it reads TTIKKSGGHYTYILE. Residues 117 to 130 lie on the Cytoplasmic side of the membrane; that stretch reads VFGPLPAFVRVWVE. A helical transmembrane segment spans residues 131–150; the sequence is LLIIRPAATAVISLAFGRYI. R135 is a binding site for L-glutamate. Over 151-163 the chain is Extracellular; the sequence is LEPFFIQCEIPEL. Residues 164–179 traverse the membrane as a helical segment; that stretch reads AIKLITAVGITVVMVL. Residues 180 to 193 lie on the Cytoplasmic side of the membrane; it reads NSMSVSWSARIQIF. Residues 194–210 form a helical membrane-spanning segment; the sequence is LTFCKLTAILIIIVPGV. At 211-234 the chain is on the extracellular side; it reads MQLIKGQTQNFKDAFSGRDSSITR. A helical membrane pass occupies residues 235–255; the sequence is LPLAFYYGMYAYAGWFYLNFV. Y244 is an L-glutamate binding site. Residues 256 to 265 are Cytoplasmic-facing; it reads TEEVENPEKT. Residues 266-286 form a helical membrane-spanning segment; that stretch reads IPLAICISMAIVTIGYVLTNV. The Extracellular portion of the chain corresponds to 287–317; that stretch reads AYFTTINAEELLLSNAVAVTFSERLLGNFSL. N-linked (GlcNAc...) asparagine glycosylation is present at N314. The helical transmembrane segment at 318–338 threads the bilayer; it reads AVPIFVALSCFGSMNGGVFAV. Residues 339–364 lie on the Cytoplasmic side of the membrane; it reads SRLFYVASREGHLPEILSMIHVRKHT. Residues 365 to 385 traverse the membrane as a helical segment; the sequence is PLPAVIVLHPLTMIMLFSGDL. Over 386–387 the chain is Extracellular; that stretch reads DS. Residues 388–408 form a helical membrane-spanning segment; the sequence is LLNFLSFARWLFIGLAVAGLI. At 409-422 the chain is on the cytoplasmic side; that stretch reads YLRYKCPDMHRPFK. The chain crosses the membrane as a helical span at residues 423-443; that stretch reads VPLFIPALFSFTCLFMVALSL. Residues 444-449 lie on the Extracellular side of the membrane; that stretch reads YSDPFS. Residues 450–470 form a helical membrane-spanning segment; the sequence is TGIGFVITLTGVPAYYLFIIW. Topologically, residues 471 to 501 are cytoplasmic; that stretch reads DKKPRWFRIMSEKITRTLQIILEVVPEEDKL.

The protein belongs to the amino acid-polyamine-organocation (APC) superfamily. L-type amino acid transporter (LAT) (TC 2.A.3.8) family. As to quaternary structure, disulfide-linked heterodimer with the amino acid transport protein SLC3A2/4F2hc; this interaction mediates cell membrane localization. In terms of processing, ubiquitinated by TRIM26; leading to proteasomal degradation. Expressed in term placenta and primary term cytotrophoblast. Expressed mainly in the brain, but also in pancreas.

The protein localises to the cell membrane. It localises to the cell projection. Its subcellular location is the microvillus membrane. The catalysed reaction is L-cystine(out) + L-glutamate(in) = L-cystine(in) + L-glutamate(out). It catalyses the reaction an L-alpha-amino acid(in) + L-kynurenine(out) = an L-alpha-amino acid(out) + L-kynurenine(in). It carries out the reaction N-acetyl-L-cysteine(out) + L-glutamate(in) = N-acetyl-L-cysteine(in) + L-glutamate(out). With respect to regulation, inhibited by erastin and sulfasalazine. Inhibited by (S)-lactate. Inactivated by p-chloromercuribenzoic acid and p-chloromercuribenzenesulfonic acid. Its function is as follows. Heterodimer with SLC3A2, that functions as an antiporter by mediating the exchange of extracellular anionic L-cystine and intracellular L-glutamate across the cellular plasma membrane. Provides L-cystine for the maintenance of the redox balance between extracellular L-cystine and L-cysteine and for the maintenance of the intracellular levels of glutathione that is essential for cells protection from oxidative stress. The transport is sodium-independent, electroneutral with a stoichiometry of 1:1, and is drove by the high intracellular concentration of L-glutamate and the intracellular reduction of L-cystine. In addition, mediates the import of L-kynurenine leading to anti-ferroptotic signaling propagation required to maintain L-cystine and glutathione homeostasis. Moreover, mediates N-acetyl-L-cysteine uptake into the placenta leading to subsequently down-regulation of pathways associated with oxidative stress, inflammation and apoptosis. In vitro can also transport L-aspartate. May participate in astrocyte and meningeal cell proliferation during development and can provide neuroprotection by promoting glutathione synthesis and delivery from non-neuronal cells such as astrocytes and meningeal cells to immature neurons. Controls the production of pheomelanin pigment directly. This is Cystine/glutamate transporter from Homo sapiens (Human).